We begin with the raw amino-acid sequence, 848 residues long: Oligopeptide transport ATP-binding protein OppF (848 aa).

Residues 13-785 enclose the ABC transporter domain; sequence VKALSMMFKV…PVHPYTRSLI (773 aa). Position 47–54 (47–54) interacts with ATP; the sequence is GESGSGKS.

It belongs to the ABC transporter superfamily. In terms of assembly, the complex is composed of two ATP-binding proteins (OppD and OppF), two transmembrane proteins (OppB and OppC) and a solute-binding protein (OppA).

The protein localises to the cell membrane. The enzyme catalyses a [peptide](out) + ATP + H2O = a [peptide](in) + ADP + phosphate + H(+). Part of the ABC transporter complex OppABCDF involved in the uptake of oligopeptides. Probably responsible for energy coupling to the transport system. This chain is Oligopeptide transport ATP-binding protein OppF (oppF), found in Mycoplasma genitalium (strain ATCC 33530 / DSM 19775 / NCTC 10195 / G37) (Mycoplasmoides genitalium).